The chain runs to 290 residues: Translin-associated protein X (290 aa).

The interval 1 to 34 (MNGKEGPGGFRKRKHDNFPHNQRREGKDASSSSP) is disordered. Over residues 16-28 (DNFPHNQRREGKD) the composition is skewed to basic and acidic residues. Residues 73–208 (LLHRITSAPD…MRMCINSVGN (136 aa)) form an interaction with C1D region. Positions 129 and 197 each coordinate Mg(2+). A Glycyl lysine isopeptide (Lys-Gly) (interchain with G-Cter in SUMO2) cross-link involves residue K279.

It belongs to the translin family. As to quaternary structure, ring-shaped heterooctamer of six TSN and two TSNAX subunits. Interacts with GOLGA3, TSNAXIP1, SUN1 and AKAP9. Interacts with the homodimeric form of C1D following gamma-radiation. Interacts with TSN and C1D in a mutually exclusive manner. Post-translationally, sumoylated with SUMO1. Detected in cerebellum.

The protein resides in the cytoplasm. Its subcellular location is the perinuclear region. It is found in the golgi apparatus. The protein localises to the nucleus. Its function is as follows. Acts in combination with TSN as an endonuclease involved in the activation of the RNA-induced silencing complex (RISC). Possible role in spermatogenesis. The chain is Translin-associated protein X (Tsnax) from Rattus norvegicus (Rat).